The chain runs to 87 residues: Bombyxin B-10 (87 aa).

A signal peptide spans Met-1–Ala-19. Cystine bridges form between Cys-27–Cys-73, Cys-39–Cys-86, and Cys-72–Cys-77. Residues Ser-46–Gly-64 constitute a propeptide, bombyxin B-10 C peptide.

This sequence belongs to the insulin family. As to quaternary structure, heterodimer of a B chain and an A chain linked by two disulfide bonds.

The protein resides in the secreted. In terms of biological role, brain peptide responsible for activation of prothoracic glands to produce ecdysone in insects. The polypeptide is Bombyxin B-10 (BBXB10) (Bombyx mori (Silk moth)).